Reading from the N-terminus, the 324-residue chain is Probable uridine nucleosidase 1 (324 aa).

The active site involves H248.

Belongs to the IUNH family.

It is found in the cytoplasm. The enzyme catalyses uridine + H2O = D-ribose + uracil. Involved in pyrimidine breakdown. This chain is Probable uridine nucleosidase 1 (URH1), found in Oryza sativa subsp. japonica (Rice).